An 86-amino-acid chain; its full sequence is MSQEPPARPDPATLSYEQARAELVDVVQRLEQGAATLEDSLALWERGEALAARCQEWLDGARDRLARVSPASGGATEAPAPAERDR.

Positions 67–86 (RVSPASGGATEAPAPAERDR) are disordered.

The protein belongs to the XseB family. In terms of assembly, heterooligomer composed of large and small subunits.

Its subcellular location is the cytoplasm. It catalyses the reaction Exonucleolytic cleavage in either 5'- to 3'- or 3'- to 5'-direction to yield nucleoside 5'-phosphates.. Functionally, bidirectionally degrades single-stranded DNA into large acid-insoluble oligonucleotides, which are then degraded further into small acid-soluble oligonucleotides. This chain is Exodeoxyribonuclease 7 small subunit, found in Beutenbergia cavernae (strain ATCC BAA-8 / DSM 12333 / CCUG 43141 / JCM 11478 / NBRC 16432 / NCIMB 13614 / HKI 0122).